We begin with the raw amino-acid sequence, 901 residues long: Probable inorganic carbon transporter subunit DabA (901 aa).

4 residues coordinate Zn(2+): Cys424, Asp426, His606, and Cys621.

Belongs to the inorganic carbon transporter (TC 9.A.2) DabA family. In terms of assembly, forms a complex with DabB. Zn(2+) is required as a cofactor.

It is found in the cell membrane. In terms of biological role, part of an energy-coupled inorganic carbon pump. The protein is Probable inorganic carbon transporter subunit DabA of Staphylococcus aureus (strain MSSA476).